A 135-amino-acid polypeptide reads, in one-letter code: Small ribosomal subunit protein bS18 (135 aa).

Residues 1–65 (MARPDMGGPK…GDEGGGRRGF (65 aa)) form a disordered region. Residues 9-41 (PKMGGGFGGPRSGGFGGGGGGGGFGGGGFGGGR) are compositionally biased toward gly residues. Residues 42–61 (GGDRGDRGDRDDRGGDEGGG) are compositionally biased toward basic and acidic residues.

This sequence belongs to the bacterial ribosomal protein bS18 family. Part of the 30S ribosomal subunit. Forms a tight heterodimer with protein bS6.

In terms of biological role, binds as a heterodimer with protein bS6 to the central domain of the 16S rRNA, where it helps stabilize the platform of the 30S subunit. The sequence is that of Small ribosomal subunit protein bS18 from Anaeromyxobacter dehalogenans (strain 2CP-C).